The sequence spans 598 residues: MSASAQQLAEELQIFGLDCEEALIEKLVELCVQYGQNEEGMVGELIAFCTSTHKVGLTSEILNSFEHEFLSKRLSKARHSTCKDSGHAGARDIVSIQELIEVEEEEEILLNSYTTPSKGSQKRAISTPETPLTKRSVSTRSPHQLLSPSSFSPSATPSQKYNSRSNRGEVVTSFGLAQGVSWSGRGGAGNISLKVLGCPEALTGSYKSMFQKLPDIREVLTCKIEELGSELKEHYKIEAFTPLLAPAQEPVTLLGQIGCDSNGKLNNKSVILEGDREHSSGAQIPVDLSELKEYSLFPGQVVIMEGINTTGRKLVATKLYEGVPLPFYQPTEEDADFEQSMVLVACGPYTTSDSITYDPLLDLIAVINHDRPDVCILFGPFLDAKHEQVENCLLTSPFEDIFKQCLRTIIEGTRSSGSHLVFVPSLRDVHHEPVYPQPPFSYSDLSREDKKQVQFVSEPCSLSINGVIFGLTSTDLLFHLGAEEISSSSGTSDRFSRILKHILTQRSYYPLYPPQEDMAIDYESFYVYAQLPVTPDVLIIPSELRYFVKDVLGCVCVNPGRLTKGQVGGTFARLYLRRPAADGAERQSPCIAVQVVRI.

A compositionally biased stretch (polar residues) spans 112 to 140 (SYTTPSKGSQKRAISTPETPLTKRSVSTR). Residues 112–167 (SYTTPSKGSQKRAISTPETPLTKRSVSTRSPHQLLSPSSFSPSATPSQKYNSRSNR) form a disordered region. Residue serine 126 is modified to Phosphoserine. Phosphothreonine occurs at positions 127 and 130. A phosphoserine mark is found at serine 141, serine 147, serine 152, and serine 154. Positions 141 to 158 (SPHQLLSPSSFSPSATPS) are enriched in low complexity.

The protein belongs to the DNA polymerase alpha subunit B family. In terms of assembly, component of the alpha DNA polymerase complex (also known as the alpha DNA polymerase-primase complex) consisting of four subunits: the catalytic subunit POLA1, the regulatory subunit POLA2, and primase complex subunits PRIM1 and PRIM2 respectively. Within the complex, POLA1 directly interacts with PRIM2/p58. Post-translationally, phosphorylated in a cell cycle-dependent manner, in G2/M phase.

It localises to the nucleus. Functionally, accessory subunit of the DNA polymerase alpha complex (also known as the alpha DNA polymerase-primase complex) which plays an essential role in the initiation of DNA synthesis. During the S phase of the cell cycle, the DNA polymerase alpha complex (composed of a catalytic subunit POLA1, an accessory subunit POLA2 and two primase subunits, the catalytic subunit PRIM1 and the regulatory subunit PRIM2) is recruited to DNA at the replicative forks via direct interactions with MCM10 and WDHD1. The primase subunit of the polymerase alpha complex initiates DNA synthesis by oligomerising short RNA primers on both leading and lagging strands. These primers are initially extended by the polymerase alpha catalytic subunit and subsequently transferred to polymerase delta and polymerase epsilon for processive synthesis on the lagging and leading strand, respectively. This Homo sapiens (Human) protein is DNA polymerase alpha subunit B (POLA2).